A 417-amino-acid chain; its full sequence is Guanine nucleotide-exchange factor SEC12 (417 aa).

Residues 1–388 are Cytoplasmic-facing; the sequence is MGRRRGVELY…QLHLLPSRRS (388 aa). Y10 is modified (3'-nitrotyrosine). The interval 101–135 is disordered; it reads KGSKAEKSGSKEQGPRQRKGAAPAEKKSGAEVHPE. 2 stretches are compositionally biased toward basic and acidic residues: residues 103–115 and 124–135; these read SKAE…EQGP and AEKKSGAEVHPE. 3 WD repeats span residues 152–191, 194–232, and 298–337; these read STEP…KVLE, AHEG…TQLQ, and CGHE…RLYY. The chain crosses the membrane as a helical span at residues 389 to 409; that stretch reads VPVWLLLLLCVGLIIVTILLL. The Lumenal portion of the chain corresponds to 410-417; that stretch reads QSAFPGFL.

As to quaternary structure, interacts with SAR1B (GDP-bound form). Interacts with MIA2; recruits PREB to endoplasmic reticulum exit sites. Interacts with CIDEB; facilitating loading of SCAP-SREBP into COPII vesicles.

The protein localises to the endoplasmic reticulum membrane. The protein resides in the nucleus. Functionally, guanine nucleotide exchange factor (GEF) that regulates the assembly of the coat protein complex II/COPII in endoplasmic reticulum (ER) to Golgi vesicle-mediated transport. Selectively activates SAR1A and SAR1B by promoting the exchange of guanosine diphosphate (GDP) for guanosine triphosphate (GTP) in these small GTPases. In their activated GTP-bound state, SAR1A and SAR1B insert into the membrane of the endoplasmic reticulum where they recruit the remainder of the coat protein complex II/COPII which is responsible for both the sorting of proteins and the deformation and budding of membranes into vesicles destined to the Golgi. Was first identified based on its probable role in the regulation of pituitary gene transcription. Binds to the prolactin gene (PRL) promoter and seems to activate transcription. This Rattus norvegicus (Rat) protein is Guanine nucleotide-exchange factor SEC12.